The chain runs to 242 residues: Terpene cyclase cle7 (242 aa).

The next 7 membrane-spanning stretches (helical) occupy residues 20 to 40 (LLLTLFSLSGTGWLINYITTI), 50 to 69 (GVSLVALTNNLAWELVFAIL), 79 to 101 (VILRSWLFVDIFVIYTTAKFARS), 117 to 137 (LFVLFGILGFFSGHWALSVLL), 143 to 163 (FYWSGMMCLVVMSGTALGILV), 172 to 192 (SYGMWFSRFVGSIFAVASLFL), and 207 to 227 (ILMRWFAGAFVVLDGLYGVCF).

This sequence belongs to the paxB family.

The protein localises to the membrane. The protein operates within secondary metabolite biosynthesis; terpenoid biosynthesis. Its function is as follows. Non-reducing polyketide synthase; part of the cluster A that mediates the biosynthesis of chevalone E and its oxidized derivatives that possess a unique five-membered lactone ring and can synergistically enhance the cytotoxicity of doxorubicin (DOX) in breast cancer cells. Within the pathway, cle7 takes part to the biosynthesis of the molecular scaffold by catalyzing the cyclization of the prenyl group initiated by protonation and ring-opening of the epoxide to produce the chevalone E intermediate. The molecular scaffold is commonly biosynthesized by a series of enzymes including the non-reducing polyketide synthase (NR-PKS) cle1 that produces the alpha-pyrone triacetic acid lactone (TAL); The membrane-bound prenyltransferase cle5 that accepts TAL as its substrate to perform a C-3 geranylgeranylation reaction, in which the pathway-dedicated GGPS cle6 is required to provide GGPP, the other substrate of cle5; the FAD-dependent monooxygenase Cle3 that forms an (S)-epoxide ring at the terminal olefin of the geranylgeranyl group; and the terpene cyclase Cle7 that catalyzes the cyclization of the prenyl group that yields the pentacyclic pathway intermediate chevalone E. Chevalone E can derivatize into seven new oxidized analogs by the cytochrome P450 monooxygenases cle2 (acting at C-20) and cle4 (acting at C-11 and C-12). The protein is Terpene cyclase cle7 of Aspergillus versicolor.